A 509-amino-acid chain; its full sequence is ATP synthase subunit beta (509 aa).

A disordered region spans residues 1 to 28; it reads MAKAATPKETAAAKKPAAPKKAASAKTA. An ATP-binding site is contributed by 187 to 194; that stretch reads GGAGVGKT.

It belongs to the ATPase alpha/beta chains family. F-type ATPases have 2 components, CF(1) - the catalytic core - and CF(0) - the membrane proton channel. CF(1) has five subunits: alpha(3), beta(3), gamma(1), delta(1), epsilon(1). CF(0) has three main subunits: a(1), b(2) and c(9-12). The alpha and beta chains form an alternating ring which encloses part of the gamma chain. CF(1) is attached to CF(0) by a central stalk formed by the gamma and epsilon chains, while a peripheral stalk is formed by the delta and b chains.

Its subcellular location is the cell inner membrane. It carries out the reaction ATP + H2O + 4 H(+)(in) = ADP + phosphate + 5 H(+)(out). Its function is as follows. Produces ATP from ADP in the presence of a proton gradient across the membrane. The catalytic sites are hosted primarily by the beta subunits. In Sinorhizobium medicae (strain WSM419) (Ensifer medicae), this protein is ATP synthase subunit beta.